The primary structure comprises 232 residues: Small ribosomal subunit protein uS3 (232 aa).

One can recognise a KH type-2 domain in the interval 39-107 (VRQFLTKELQ…PAQINIAEVR (69 aa)). Positions 213–232 (AANAVEPKGDKPKKQRKGRK) are disordered.

It belongs to the universal ribosomal protein uS3 family. Part of the 30S ribosomal subunit. Forms a tight complex with proteins S10 and S14.

Its function is as follows. Binds the lower part of the 30S subunit head. Binds mRNA in the 70S ribosome, positioning it for translation. The chain is Small ribosomal subunit protein uS3 from Vibrio campbellii (strain ATCC BAA-1116).